We begin with the raw amino-acid sequence, 161 residues long: Endoribonuclease YbeY (161 aa).

Residues histidine 120, histidine 124, and aspartate 130 each coordinate Zn(2+).

Belongs to the endoribonuclease YbeY family. It depends on Zn(2+) as a cofactor.

The protein resides in the cytoplasm. Functionally, single strand-specific metallo-endoribonuclease involved in late-stage 70S ribosome quality control and in maturation of the 3' terminus of the 16S rRNA. The chain is Endoribonuclease YbeY from Chlamydia muridarum (strain MoPn / Nigg).